The following is a 321-amino-acid chain: Beta-ketoacyl-[acyl-carrier-protein] synthase III (321 aa).

Catalysis depends on residues C115 and H248. The tract at residues 249–253 (QANIR) is ACP-binding. Residue N278 is part of the active site.

Belongs to the thiolase-like superfamily. FabH family. In terms of assembly, homodimer.

The protein resides in the cytoplasm. It carries out the reaction malonyl-[ACP] + acetyl-CoA + H(+) = 3-oxobutanoyl-[ACP] + CO2 + CoA. It functions in the pathway lipid metabolism; fatty acid biosynthesis. Catalyzes the condensation reaction of fatty acid synthesis by the addition to an acyl acceptor of two carbons from malonyl-ACP. Catalyzes the first condensation reaction which initiates fatty acid synthesis and may therefore play a role in governing the total rate of fatty acid production. Possesses both acetoacetyl-ACP synthase and acetyl transacylase activities. Its substrate specificity determines the biosynthesis of branched-chain and/or straight-chain of fatty acids. In Azoarcus sp. (strain BH72), this protein is Beta-ketoacyl-[acyl-carrier-protein] synthase III.